We begin with the raw amino-acid sequence, 578 residues long: Probable nucleoredoxin 1 (578 aa).

Thioredoxin domains follow at residues 18–172 (SLLS…RARR), 178–321 (SVLV…EKFQ), and 325–485 (ELEK…EIEA).

This sequence belongs to the nucleoredoxin family.

It catalyses the reaction [protein]-dithiol + NAD(+) = [protein]-disulfide + NADH + H(+). The catalysed reaction is [protein]-dithiol + NADP(+) = [protein]-disulfide + NADPH + H(+). In terms of biological role, probable thiol-disulfide oxidoreductase required for pollen tube growth and pollen function in the pistil. Seems not to be required for in vitro pollen tube growth. May be involved in the generation of lipid signaling molecules in pistil. The sequence is that of Probable nucleoredoxin 1 from Arabidopsis thaliana (Mouse-ear cress).